A 324-amino-acid polypeptide reads, in one-letter code: Hydroxylase/desaturase CTB9 (324 aa).

Over residues methionine 1–leucine 11 the composition is skewed to polar residues. Disordered regions lie at residues methionine 1 to proline 33 and threonine 288 to alanine 308.

It belongs to the asaB hydroxylase/desaturase family.

The protein operates within mycotoxin biosynthesis. In terms of biological role, hydroxylase/desaturase; part of the gene cluster that mediates the biosynthesis of cercosporin, a light-activated, non-host-selective toxin. The perylenequinone chromophore of cercosporin absorbs light energy to attain an electronically-activated triplet state and produces active oxygen species such as the hydroxyl radical, superoxide, hydrogen peroxide or singlet oxygen upon reaction with oxygen molecules. These reactive oxygen species cause damage to various cellular components including lipids, proteins and nucleic acids. The first step of cercosporin biosynthesis is performed by the polyketide synthase CTB1 which catalyzes the formation of nor-toralactone. The starter unit acyltransferase (SAT) domain of CTB1 initiates polyketide extension by the selective utilization of acetyl-CoA, which is elongated to the heptaketide in the beta-ketoacyl synthase (KS) domain by successive condensations with six malonyl units introduced by the malonyl acyltransferase (MAT) domain. The product template (PT) domain catalyzes C4-C9 and C2-C11 aldol cyclizations and dehydrations to a trihydroxynaphthalene, which is thought to be delivered to the thioesterase (TE) domain for product release. The bifunctional enzyme CTB3 then methylates nor-toralactone to toralactone before conducting an unusual oxidative aromatic ring opening. The O-methyltransferase CTB2 further methylates the nascent OH-6 of the CBT3 product, blocking further oxidation at this site before the reductase CTB6 reduces the 2-oxopropyl ketone at position C7, giving naphthalene. The FAD-dependent monooxygenase CTB5 in concert with the multicopper oxidase CTB12 are responsible for homodimerization of naphthalene with CTB7 installing the dioxepine moiety, finally producing cercosporin. The fasciclin domain-containing protein CTB11 might act with CTB5 and CTB12 whereas the roles of CTB9 and CTB10 have still to be elucidated. This chain is Hydroxylase/desaturase CTB9, found in Cercospora beticola (Sugarbeet leaf spot fungus).